Reading from the N-terminus, the 387-residue chain is Chaperone protein DnaJ (387 aa).

The 65-residue stretch at 6 to 70 (DYYETLGVSR…QKRAAYDQYG (65 aa)) folds into the J domain. A CR-type zinc finger spans residues 143-225 (GKDTKISYDR…CHGTGHEQER (83 aa)). 8 residues coordinate Zn(2+): Cys156, Cys159, Cys173, Cys176, Cys199, Cys202, Cys213, and Cys216. CXXCXGXG motif repeat units follow at residues 156-163 (CHTCNGSG), 173-180 (CHKCHGSG), 199-206 (CDVCGGTG), and 213-220 (CPTCHGTG).

It belongs to the DnaJ family. As to quaternary structure, homodimer. Zn(2+) is required as a cofactor.

The protein resides in the cytoplasm. Its function is as follows. Participates actively in the response to hyperosmotic and heat shock by preventing the aggregation of stress-denatured proteins and by disaggregating proteins, also in an autonomous, DnaK-independent fashion. Unfolded proteins bind initially to DnaJ; upon interaction with the DnaJ-bound protein, DnaK hydrolyzes its bound ATP, resulting in the formation of a stable complex. GrpE releases ADP from DnaK; ATP binding to DnaK triggers the release of the substrate protein, thus completing the reaction cycle. Several rounds of ATP-dependent interactions between DnaJ, DnaK and GrpE are required for fully efficient folding. Also involved, together with DnaK and GrpE, in the DNA replication of plasmids through activation of initiation proteins. This chain is Chaperone protein DnaJ, found in Lacticaseibacillus paracasei (strain ATCC 334 / BCRC 17002 / CCUG 31169 / CIP 107868 / KCTC 3260 / NRRL B-441) (Lactobacillus paracasei).